The sequence spans 1127 residues: MVLSGVDKMIRLQKNTANIRNICVLAHVDHGKTTLADCLISSNGIISSRLAGKLRYMDSREDEQVRGITMKSSAISLHYAEGHEEYLINLIDSPGHVDFSSEVSTAVRICDGCIIVVDAVEGVCPQTQAVLRQAWLENIRPVLVINKIDRLIVELKFTPQEAYSHLKNILEQINALTGTLFTSKVLEERAERETESQAKPHSEQGEQVYDWSAGLEDVDDSQLYFSPEQGNVVFTSAIDGWGFGIEHFARIYSQKIGIKKEVLLKTLWGDYYINMKAKKIMKVDQAKGKKPLFVQLILENIWSLYDAVLKKDKEKIDKIVTSLGLKIGAREARHSDPKVQINAICSQWLPISHAVLAMVCHKLPSPLDMTSERVEKLLCTGSQTFESLPPETQALKAAFMKCGSEDTAPVIIFVSKMFAVDVKALPQNKPRPLTQEEMAQRRERARQRHAEKLAAAQGQTSQGPTQDGGALETSPHEDEPRGDEPDVASVSRQPVSQEESSQEAFIAFARVFSGIARRGKKIFVLGPKYSPVDFLQRVPLGFSAPLEDLPPVPHMACCTLENLYLLMGRELEDLEEVPPGNVLGIGGLQDFVLKSATLCSLPSCPPFIPLNFEATPIVRVAVEPKHPSEMPQLVKGMKLLNQADPCVQVLIQETGEHVLVTAGEVHLQRCLDDLRERFAKIHISVSEPIIPFRETITKPPKVDMVNEEIGRQQKVAVIHQTKEEQSKIPEGIHVDSDGLITIPTPNKLATLSVRAIPLPEEVTRILEENSDLIRSMELLTSSLNEGRNTQAIHQKTQEKIWEFKGKLEKHLTGRKWRNTVDQIWSFGPRKCGPNILVSRSEDFQNSVWSGPAGRESKEASRFRDFGNSIVSGFQLATLSGPMCEEPLMGVCFVLEKWELNKCAEQGASDKQHQGQCDLAGEGQGGGKTCHVGDENQEQQDVCSEPFEETSQKGDSPVIDCYGPFSGQLIATMKEACRYALQVKPQRLMAAMYTCDIMATSDVLGRVYAVLSKREGRVLQEEMKEGTDMFIIKAVLPVAESFGFADEIRKRTSGLASPQLVFSHWEVIPSDPFWVPTTEEEYLHFGEKADSENQARKYMNAVRKRKGLYVEEKIVEHAEKQRTLSKNK.

The 256-residue stretch at 17 to 272 (ANIRNICVLA…LLKTLWGDYY (256 aa)) folds into the tr-type G domain. GTP contacts are provided by residues 26–33 (AHVDHGKT), 92–96 (DSPGH), and 146–149 (NKID). A disordered region spans residues 429–496 (KPRPLTQEEM…VASVSRQPVS (68 aa)). Basic and acidic residues-rich tracts occupy residues 438-452 (MAQRRERARQRHAEK) and 474-484 (SPHEDEPRGDE). Lys-528 is modified (N6-acetyllysine).

It belongs to the TRAFAC class translation factor GTPase superfamily. Classic translation factor GTPase family. Associates with the 60S ribosomal subunit. Found in a complex consisting of the 60S ribosomal subunit, SBDS and EFL1.

It catalyses the reaction GTP + H2O = GDP + phosphate + H(+). Its activity is regulated as follows. GTPase activity is stimulated in the presence of 60S ribosome subunits. Its function is as follows. GTPase involved in the biogenesis of the 60S ribosomal subunit and translational activation of ribosomes. Together with SBDS, triggers the GTP-dependent release of EIF6 from 60S pre-ribosomes in the cytoplasm, thereby activating ribosomes for translation competence by allowing 80S ribosome assembly and facilitating EIF6 recycling to the nucleus, where it is required for 60S rRNA processing and nuclear export. The polypeptide is Elongation factor-like GTPase 1 (Efl1) (Mus musculus (Mouse)).